Reading from the N-terminus, the 506-residue chain is RNA-splicing ligase RtcB homolog (506 aa).

Aspartate 120, cysteine 123, histidine 228, histidine 260, and histidine 354 together coordinate Mn(2+). 227–231 is a binding site for GMP; sequence NHYAE. Residues 354-355, 403-406, serine 410, 429-432, and lysine 505 each bind GMP; these read HN, GGTM, and HGAG. Histidine 429 (GMP-histidine intermediate) is an active-site residue.

The protein belongs to the RtcB family. Catalytic component of the tRNA-splicing ligase complex. The cofactor is Mn(2+).

The enzyme catalyses a 3'-end 3'-phospho-ribonucleotide-RNA + a 5'-end dephospho-ribonucleoside-RNA + GTP = a ribonucleotidyl-ribonucleotide-RNA + GMP + diphosphate. The catalysed reaction is a 3'-end 2',3'-cyclophospho-ribonucleotide-RNA + a 5'-end dephospho-ribonucleoside-RNA + GTP + H2O = a ribonucleotidyl-ribonucleotide-RNA + GMP + diphosphate + H(+). Functionally, catalytic subunit of the tRNA-splicing ligase complex that acts by directly joining spliced tRNA halves to mature-sized tRNAs by incorporating the precursor-derived splice junction phosphate into the mature tRNA as a canonical 3',5'-phosphodiester. May act as an RNA ligase with broad substrate specificity, and may function toward other RNAs. The chain is RNA-splicing ligase RtcB homolog from Plasmodium falciparum (isolate 3D7).